We begin with the raw amino-acid sequence, 283 residues long: Glutamate racemase (283 aa).

Substrate-binding positions include 7–8 and 39–40; these read DS and YG. The active-site Proton donor/acceptor is the C70. Position 71-72 (71-72) interacts with substrate; sequence NT. The Proton donor/acceptor role is filled by C206. Residue 207–208 coordinates substrate; that stretch reads TH.

This sequence belongs to the aspartate/glutamate racemases family.

The enzyme catalyses L-glutamate = D-glutamate. Its pathway is cell wall biogenesis; peptidoglycan biosynthesis. Functionally, provides the (R)-glutamate required for cell wall biosynthesis. The protein is Glutamate racemase of Phenylobacterium zucineum (strain HLK1).